Consider the following 372-residue polypeptide: MKYLRHRRPNATLILAIGAFTLLLFSLLVSPPTCKVQEQPPAIPEALAWPTPPTRPAPAPCHANTSMVTHPDFATQPQHVQNFLLYRHCRHFPLLQDVPPSKCAQPVFLLLVIKSSPSNYVRRELLRRTWGRERKVRGLQLRLLFLVGTASNPHEARKVNRLLELEAQTHGDILQWDFHDSFFNLTLKQVLFLQWQETRCANASFVLNGDDDVFAHTDNMVFYLQDHDPGRHLFVGQLIQNVGPIRAFWSKYYVPEVVTQNERYPPYCGGGGFLLSRFTAAALRRAAHVLDIFPIDDVFLGMCLELEGLKPASHSGIRTSGVRAPSQRLSSFDPCFYRDLLLVHRFLPYEMLLMWDALNQPNLTCGNQTQIY.

The Cytoplasmic portion of the chain corresponds to 1 to 10 (MKYLRHRRPN). A helical; Signal-anchor for type II membrane protein membrane pass occupies residues 11–31 (ATLILAIGAFTLLLFSLLVSP). Residues 32–372 (PTCKVQEQPP…LTCGNQTQIY (341 aa)) are Lumenal-facing. Residues Asn64, Asn184, Asn202, Asn362, and Asn367 are each glycosylated (N-linked (GlcNAc...) asparagine).

It belongs to the glycosyltransferase 31 family. As to expression, expressed in colon, jejunum, stomach, esophagus, placenta and trachea.

The protein localises to the golgi apparatus membrane. It carries out the reaction a 3-O-{beta-D-galactosyl-(1-&gt;3)-[N-acetyl-beta-D-glucosaminyl-(1-&gt;6)]-N-acetyl-alpha-D-galactosaminyl}-L-threonyl-[protein] + UDP-N-acetyl-alpha-D-glucosamine = 3-O-{beta-D-GlcNAc-(1-&gt;3)-beta-D-Gal-(1-&gt;3)-[beta-D-GlcNAc-(1-&gt;6)]-alpha-D-GalNAc}-L-threonyl-[protein] + UDP + H(+). The enzyme catalyses 3-O-{beta-D-galactosyl-(1-&gt;3)-[N-acetyl-beta-D-glucosaminyl-(1-&gt;6)]-N-acetyl-alpha-D-galactosaminyl}-L-seryl-[protein] + UDP-N-acetyl-alpha-D-glucosamine = 3-O-{beta-D-GlcNAc-(1-&gt;3)-beta-D-Gal-(1-&gt;3)-[beta-D-GlcNAc-(1-&gt;6)]-alpha-D-GalNAc}-L-seryl-[protein] + UDP + H(+). It catalyses the reaction a beta-D-galactosyl-(1-&gt;4)-N-acetyl-beta-D-glucosaminyl derivative + UDP-N-acetyl-alpha-D-glucosamine = an N-acetyl-beta-D-glucosaminyl-(1-&gt;3)-beta-D-galactosyl-(1-&gt;4)-N-acetyl-beta-D-glucosaminyl derivative + UDP + H(+). The protein operates within protein modification; protein glycosylation. Its function is as follows. Beta-1,3-N-acetylglucosaminyltransferase involved in the synthesis of poly-N-acetyllactosamine. Has activity for type 2 oligosaccharides. Also acts as a core1-1,3-N-acetylglucosaminyltransferase (Core1-beta3GlcNAcT) to form the 6-sulfo sialyl Lewis x on extended core1 O-glycans. This chain is N-acetyllactosaminide beta-1,3-N-acetylglucosaminyltransferase 3 (B3GNT3), found in Homo sapiens (Human).